The following is a 308-amino-acid chain: Eugenol synthase 1 (308 aa).

NADP(+) contacts are provided by residues 13–16 (TGYI), 35–45 (VRESTVSDPAK), R36, 86–88 (QMQ), 111–113 (SEF), K133, and 153–155 (NCF). K133 (proton donor/acceptor) is an active-site residue.

The protein belongs to the NmrA-type oxidoreductase family. In flowers, mostly expressed in limbs, and, to a lower extent, in tubes.

It carries out the reaction eugenol + a carboxylate + NADP(+) = a coniferyl ester + NADPH. The catalysed reaction is eugenol + acetate + NADP(+) = (E)-coniferyl acetate + NADPH. The protein operates within aromatic compound metabolism; phenylpropanoid biosynthesis. Functionally, involved in the biosynthesis of the floral volatile eugenol. Catalyzes the synthesis of the phenylpropene eugenol from coniferyl acetate. Phenylpropenes are produced by plants as defense compounds with antimicrobial and antianimal properties, or as floral attractants of pollinators. The chain is Eugenol synthase 1 from Petunia hybrida (Petunia).